The following is a 393-amino-acid chain: Digeranylgeranylglycerophospholipid reductase (393 aa).

9 residues coordinate FAD: Ala13, Asp32, Cys43, Ala44, Gly46, Arg95, Val119, Asp274, and Gly286. Residues Arg327 and Gly363 each contribute to the a 2,3-bis-O-(geranylgeranyl)-sn-glycerol 1-phospholipid site.

This sequence belongs to the geranylgeranyl reductase family. DGGGPL reductase subfamily. FAD serves as cofactor.

The enzyme catalyses a 2,3-bis-O-phytanyl-sn-glycerol 1-phospholipid + 8 A = a 2,3-bis-O-(geranylgeranyl)-sn-glycerol 1-phospholipid + 8 AH2. The catalysed reaction is 2,3-bis-O-(phytanyl)-sn-glycerol 1-phosphate + 8 A = 2,3-bis-O-(geranylgeranyl)-sn-glycerol 1-phosphate + 8 AH2. It catalyses the reaction CDP-2,3-bis-O-(geranylgeranyl)-sn-glycerol + 8 AH2 = CDP-2,3-bis-O-(phytanyl)-sn-glycerol + 8 A. It carries out the reaction archaetidylserine + 8 AH2 = 2,3-bis-O-phytanyl-sn-glycero-3-phospho-L-serine + 8 A. The protein operates within membrane lipid metabolism; glycerophospholipid metabolism. Its function is as follows. Is involved in the reduction of 2,3-digeranylgeranylglycerophospholipids (unsaturated archaeols) into 2,3-diphytanylglycerophospholipids (saturated archaeols) in the biosynthesis of archaeal membrane lipids. Catalyzes the formation of archaetidic acid (2,3-di-O-phytanyl-sn-glyceryl phosphate) from 2,3-di-O-geranylgeranylglyceryl phosphate (DGGGP) via the hydrogenation of each double bond of the isoprenoid chains. Is also probably able to reduce double bonds of geranyl groups in CDP-2,3-bis-O-(geranylgeranyl)-sn-glycerol and archaetidylserine, thus acting at various stages in the biosynthesis of archaeal membrane lipids. In Pyrococcus horikoshii (strain ATCC 700860 / DSM 12428 / JCM 9974 / NBRC 100139 / OT-3), this protein is Digeranylgeranylglycerophospholipid reductase.